The primary structure comprises 525 residues: Peptide chain release factor 3 (525 aa).

Residues 9-276 (AKRRTFAIIS…GFTRYAPAPQ (268 aa)) form the tr-type G domain. GTP is bound by residues 18 to 25 (SHPDAGKT), 86 to 90 (DTPGH), and 140 to 143 (NKFD).

It belongs to the TRAFAC class translation factor GTPase superfamily. Classic translation factor GTPase family. PrfC subfamily.

Its subcellular location is the cytoplasm. Functionally, increases the formation of ribosomal termination complexes and stimulates activities of RF-1 and RF-2. It binds guanine nucleotides and has strong preference for UGA stop codons. It may interact directly with the ribosome. The stimulation of RF-1 and RF-2 is significantly reduced by GTP and GDP, but not by GMP. The sequence is that of Peptide chain release factor 3 from Francisella tularensis subsp. holarctica (strain FTNF002-00 / FTA).